A 580-amino-acid chain; its full sequence is M-phase inducer phosphatase 2 (580 aa).

A disordered region spans residues 1-24 (MEVPQPEPAPGSALSPAGVCGGAQ). Phosphoserine is present on Ser42. Residues 89-107 (SLSRRASESSLSSESSESS) are compositionally biased toward low complexity. 2 disordered regions span residues 89 to 117 (SLSR…DSPS) and 165 to 196 (NITN…ENDG). Ser169 is subject to Phosphoserine; by MELK. Ser249 bears the Phosphoserine mark. A Phosphoserine; by MELK and MAPK14 modification is found at Ser323. The tract at residues 331 to 370 (PILKRLERPQDRDTPVQNKRRRSVTPPEEQQEAEEPKARV) is disordered. The segment covering 334-344 (KRLERPQDRDT) has biased composition (basic and acidic residues). Ser353 carries the phosphoserine; by AURKA modification. A Phosphoserine; by BRSK1 and MAPK14 modification is found at Ser375. Residues 431–538 (IVDKFVIVDC…FFPQHPNFCE (108 aa)) enclose the Rhodanese domain. Ser470 carries the phosphoserine modification. Residue Cys487 is part of the active site. Ser563 carries the post-translational modification Phosphoserine.

This sequence belongs to the MPI phosphatase family. As to quaternary structure, interacts with MAPK14 and 14-3-3 proteins. In terms of processing, phosphorylated by BRSK1 in vitro. Phosphorylated by CHEK1, which inhibits the activity of this protein. Phosphorylation at Ser-353 by AURKA might locally participate in the control of the onset of mitosis. Phosphorylation by MELK at Ser-169 promotes localization to the centrosome and the spindle poles during mitosis. Phosphorylation at Ser-323 and Ser-375 by MAPK14 is required for binding to 14-3-3 proteins.

It localises to the cytoplasm. The protein localises to the cytoskeleton. It is found in the microtubule organizing center. The protein resides in the centrosome. Its subcellular location is the spindle pole. The enzyme catalyses O-phospho-L-tyrosyl-[protein] + H2O = L-tyrosyl-[protein] + phosphate. Its activity is regulated as follows. Stimulated by B-type cyclins. Functionally, tyrosine protein phosphatase which functions as a dosage-dependent inducer of mitotic progression. Directly dephosphorylates CDK1 and stimulates its kinase activity. Required for G2/M phases of the cell cycle progression and abscission during cytokinesis in a ECT2-dependent manner. The three isoforms seem to have a different level of activity. In Homo sapiens (Human), this protein is M-phase inducer phosphatase 2 (CDC25B).